The chain runs to 214 residues: uncharacterized protein (214 aa).

The AMMECR1 domain maps to 1–194 (MVSANREMAV…MHYSEYLSYV (194 aa)).

This is an uncharacterized protein from Arabidopsis thaliana (Mouse-ear cress).